We begin with the raw amino-acid sequence, 351 residues long: Muscleblind-like protein 2a (351 aa).

4 C3H1-type zinc fingers span residues 13-41 (WLTL…HPPK), 47-73 (NGRV…HPPA), 177-205 (TDKL…HPSD), and 213-239 (DNTV…HPPA).

This sequence belongs to the muscleblind family. In terms of tissue distribution, expressed in fast and slow myotomal muscle, heart, liver, skin, brain and testis.

Its subcellular location is the nucleus. The protein localises to the cytoplasm. Its function is as follows. Involved in pre-mRNA alternative splicing regulation. RNA-binding protein that binds to 5'ACACCC-3' core sequence. The chain is Muscleblind-like protein 2a (mbnl2a) from Takifugu rubripes (Japanese pufferfish).